A 176-amino-acid polypeptide reads, in one-letter code: NAD(P)H-quinone oxidoreductase subunit 6, chloroplastic (176 aa).

Helical transmembrane passes span 10 to 30 (FLLV…VLLT), 32 to 52 (PIFS…FYIL), 61 to 81 (AQLL…VMFM), 95 to 115 (VGNG…ITII), and 152 to 172 (FFLP…GAIA).

This sequence belongs to the complex I subunit 6 family. As to quaternary structure, NDH is composed of at least 16 different subunits, 5 of which are encoded in the nucleus.

The protein localises to the plastid. The protein resides in the chloroplast thylakoid membrane. It carries out the reaction a plastoquinone + NADH + (n+1) H(+)(in) = a plastoquinol + NAD(+) + n H(+)(out). The enzyme catalyses a plastoquinone + NADPH + (n+1) H(+)(in) = a plastoquinol + NADP(+) + n H(+)(out). Its function is as follows. NDH shuttles electrons from NAD(P)H:plastoquinone, via FMN and iron-sulfur (Fe-S) centers, to quinones in the photosynthetic chain and possibly in a chloroplast respiratory chain. The immediate electron acceptor for the enzyme in this species is believed to be plastoquinone. Couples the redox reaction to proton translocation, and thus conserves the redox energy in a proton gradient. The chain is NAD(P)H-quinone oxidoreductase subunit 6, chloroplastic (ndhG) from Populus alba (White poplar).